We begin with the raw amino-acid sequence, 147 residues long: UPF0306 protein YhbP (147 aa).

The protein belongs to the UPF0306 family.

This Salmonella arizonae (strain ATCC BAA-731 / CDC346-86 / RSK2980) protein is UPF0306 protein YhbP.